A 280-amino-acid polypeptide reads, in one-letter code: MALKSYKPTTPGQRGLVLIDRSELWKGRPVKALTEGLSKHGGRNNTGRITMRRKGGGAKRLYRIVDFKRNKMDVAATVERIEYDPNRTAFIALVKYEDGEQAYILAPQRLAVGDTVVASQKADIKPGNAMPFSGMPIGTIIHNIEMKPGKGGQIARAAGTYAQFVGRDGGYAQIRLSSGELRLVRQECMATVGAVSNPDNSNQNYGKAGRMRHKGVRPSVRGVVMNPIDHPHGGGEGRTSGGRHPVTPWGKPTKGAKTRNKKKASSQLIIRSRHAKKKGR.

The segment at 226–280 is disordered; sequence NPIDHPHGGGEGRTSGGRHPVTPWGKPTKGAKTRNKKKASSQLIIRSRHAKKKGR. Composition is skewed to basic residues over residues 254–264 and 271–280; these read KGAKTRNKKKA and RSRHAKKKGR.

It belongs to the universal ribosomal protein uL2 family. As to quaternary structure, part of the 50S ribosomal subunit. Forms a bridge to the 30S subunit in the 70S ribosome.

In terms of biological role, one of the primary rRNA binding proteins. Required for association of the 30S and 50S subunits to form the 70S ribosome, for tRNA binding and peptide bond formation. It has been suggested to have peptidyltransferase activity; this is somewhat controversial. Makes several contacts with the 16S rRNA in the 70S ribosome. This Roseobacter denitrificans (strain ATCC 33942 / OCh 114) (Erythrobacter sp. (strain OCh 114)) protein is Large ribosomal subunit protein uL2.